A 535-amino-acid chain; its full sequence is MGSSSKSEKRKYDDGEELLERKKLKLQKKQEKKEKKDKKEKKDKKEKKDKKEKKDKKEKNKESKEAEARDDSGSNVQASSSSSTESTSYGYVQSSKVKDVPQSEVDKFLTDNEVTVEDPQHLHYRPILSFDQIKLQKDVSSKLTKFPKPTPIQSVSWPFLLDGKDVVGVAETGSGKTFAFGVPAINNIITSKNKDLSVLCISPTRELALQIYDNLEDLTRGTDVSCVAIYGGVSKDDQIKKIRNGANVVVATPGRLVDLINDGAVDLSSINYLVLDEADRMLEKGFEEDIKLIIGSTPAQGRQTLMFTATWPKEVRELANNFMNQPVKVTIGDRDELSANKRITQIVEVLDDKFQKEKKLINLLQKYQNTGNGDNKILVFALYKKEASRIESLLHRNKFKVAAIHGDLSQQQRTQALQSFKSGECNLLLATDVAARGLDIPNVKYVINLTFPLTIEDYVHRLGRTGRAGQTGIAHTFFTEDEKHLSGALCNILRGANQPVPEALLKYGGHTKKKTHSVYGAFYKDVDMPIDSKED.

Over residues 1–21 the composition is skewed to basic and acidic residues; the sequence is MGSSSKSEKRKYDDGEELLER. The segment at 1–96 is disordered; it reads MGSSSKSEKR…TSYGYVQSSK (96 aa). A compositionally biased stretch (basic residues) spans 35–54; the sequence is KKDKKEKKDKKEKKDKKEKK. The span at 55–72 shows a compositional bias: basic and acidic residues; that stretch reads DKKEKNKESKEAEARDDS. A compositionally biased stretch (low complexity) spans 79 to 88; sequence SSSSSTESTS. The Q motif signature appears at 128-154; sequence LSFDQIKLQKDVSSKLTKFPKPTPIQS. A Helicase ATP-binding domain is found at 157-329; the sequence is WPFLLDGKDV…NNFMNQPVKV (173 aa). Residue 170–177 coordinates ATP; that stretch reads AETGSGKT. The DEAD box signature appears at 276–279; sequence DEAD. One can recognise a Helicase C-terminal domain in the interval 362–508; sequence NLLQKYQNTG…PVPEALLKYG (147 aa).

The protein belongs to the DEAD box helicase family. DDX5/DBP2 subfamily.

Its subcellular location is the nucleus. The protein resides in the nucleolus. The enzyme catalyses ATP + H2O = ADP + phosphate + H(+). In terms of biological role, ATP-dependent RNA helicase required for 60S ribosomal subunit synthesis. Involved in efficient pre-rRNA processing, predominantly at site A3, which is necessary for the normal formation of 25S and 5.8S rRNAs. In Lodderomyces elongisporus (strain ATCC 11503 / CBS 2605 / JCM 1781 / NBRC 1676 / NRRL YB-4239) (Yeast), this protein is ATP-dependent RNA helicase DBP3 (DBP3).